The chain runs to 542 residues: Protein DETOXIFICATION 34 (542 aa).

12 consecutive transmembrane segments (helical) span residues 97 to 117, 127 to 147, 176 to 196, 204 to 224, 240 to 260, 272 to 292, 316 to 336, 344 to 364, 390 to 410, 435 to 455, 462 to 482, and 491 to 511; these read APIAFNILCNYGVNSFTSIFV, AVAIALSVVSNFSFGFLLGMA, ILLGTSVCLLPLYIYATPLLI, IAEISGKFTTQIIPQMFALAI, IMAWIGFFALTLHIFILYLFI, AAFDVSAWGIAIAQVVYVVGW, FASAVMLCLEIWYFMTIIVLT, IAVGSLSICMNINGWEGMLFI, VIVTVIESLVIGVVCAIVILI, LLGITMILNSLQPVISGVAVG, VAYINLFCYYAFGLPLGFLLG, and GIWIGMICGTSLQTLILLYMI.

The protein belongs to the multi antimicrobial extrusion (MATE) (TC 2.A.66.1) family.

Its subcellular location is the membrane. The chain is Protein DETOXIFICATION 34 from Arabidopsis thaliana (Mouse-ear cress).